Consider the following 66-residue polypeptide: Large ribosomal subunit protein bL35 (66 aa).

Basic residues predominate over residues 1–26; it reads MPKMKTHRGSAKRFKKTGSGKLKRSH. Positions 1 to 45 are disordered; sequence MPKMKTHRGSAKRFKKTGSGKLKRSHAYTSHLFANKSQKQKRKLR.

This sequence belongs to the bacterial ribosomal protein bL35 family.

The chain is Large ribosomal subunit protein bL35 from Bacillus velezensis (strain DSM 23117 / BGSC 10A6 / LMG 26770 / FZB42) (Bacillus amyloliquefaciens subsp. plantarum).